A 605-amino-acid polypeptide reads, in one-letter code: Elongation factor 4 (605 aa).

A tr-type G domain is found at 9 to 191 (DTIRNFCIIA…AIIKRVPAPV (183 aa)). GTP-binding positions include 21–26 (DHGKST) and 138–141 (NKID).

It belongs to the TRAFAC class translation factor GTPase superfamily. Classic translation factor GTPase family. LepA subfamily.

It is found in the cell inner membrane. It carries out the reaction GTP + H2O = GDP + phosphate + H(+). Functionally, required for accurate and efficient protein synthesis under certain stress conditions. May act as a fidelity factor of the translation reaction, by catalyzing a one-codon backward translocation of tRNAs on improperly translocated ribosomes. Back-translocation proceeds from a post-translocation (POST) complex to a pre-translocation (PRE) complex, thus giving elongation factor G a second chance to translocate the tRNAs correctly. Binds to ribosomes in a GTP-dependent manner. This Chlorobium phaeobacteroides (strain BS1) protein is Elongation factor 4.